The chain runs to 568 residues: Urease subunit beta (568 aa).

One can recognise a Urease domain in the interval 131–568; the sequence is GGIDTHIHFI…LSLAQLYNLF (438 aa). Ni(2+) is bound by residues histidine 136, histidine 138, and lysine 219. The residue at position 219 (lysine 219) is an N6-carboxylysine. Residue histidine 221 coordinates substrate. Residues histidine 248 and histidine 274 each contribute to the Ni(2+) site. Histidine 321 acts as the Proton donor in catalysis. Position 361 (aspartate 361) interacts with Ni(2+).

This sequence belongs to the metallo-dependent hydrolases superfamily. Urease alpha subunit family. Heterohexamer of 3 UreA (alpha) and 3 UreB (beta) subunits. Ni cation is required as a cofactor. Carboxylation allows a single lysine to coordinate two nickel ions.

It is found in the cytoplasm. The enzyme catalyses urea + 2 H2O + H(+) = hydrogencarbonate + 2 NH4(+). It participates in nitrogen metabolism; urea degradation; CO(2) and NH(3) from urea (urease route): step 1/1. The protein is Urease subunit beta of Helicobacter heilmannii.